The following is a 147-amino-acid chain: Ribonuclease P protein component 2 (147 aa).

It belongs to the eukaryotic/archaeal RNase P protein component 2 family. Consists of a catalytic RNA component and at least 4-5 protein subunits.

It is found in the cytoplasm. It carries out the reaction Endonucleolytic cleavage of RNA, removing 5'-extranucleotides from tRNA precursor.. Its function is as follows. Part of ribonuclease P, a protein complex that generates mature tRNA molecules by cleaving their 5'-ends. The sequence is that of Ribonuclease P protein component 2 from Methanocorpusculum labreanum (strain ATCC 43576 / DSM 4855 / Z).